The sequence spans 237 residues: LexA repressor (237 aa).

Positions 26–46 (FDEMKIALELTSKSGIHRLIT) form a DNA-binding region, H-T-H motif. Catalysis depends on for autocatalytic cleavage activity residues Ser158 and Lys196.

Belongs to the peptidase S24 family. In terms of assembly, homodimer.

It carries out the reaction Hydrolysis of Ala-|-Gly bond in repressor LexA.. Represses a number of genes involved in the response to DNA damage (SOS response), including recA and lexA. In the presence of single-stranded DNA, RecA interacts with LexA causing an autocatalytic cleavage which disrupts the DNA-binding part of LexA, leading to derepression of the SOS regulon and eventually DNA repair. The chain is LexA repressor from Bartonella quintana (strain Toulouse) (Rochalimaea quintana).